Reading from the N-terminus, the 288-residue chain is Acetyl-coenzyme A carboxylase carboxyl transferase subunit beta (288 aa).

In terms of domain architecture, CoA carboxyltransferase N-terminal spans 34 to 288 (LFAKCPACKH…HLVAFHGGGQ (255 aa)). Residues C38, C41, C56, and C59 each coordinate Zn(2+). The C4-type zinc finger occupies 38–59 (CPACKHMIYKKDLGLAKICPTC).

It belongs to the AccD/PCCB family. Acetyl-CoA carboxylase is a heterohexamer composed of biotin carboxyl carrier protein (AccB), biotin carboxylase (AccC) and two subunits each of ACCase subunit alpha (AccA) and ACCase subunit beta (AccD). It depends on Zn(2+) as a cofactor.

It is found in the cytoplasm. It catalyses the reaction N(6)-carboxybiotinyl-L-lysyl-[protein] + acetyl-CoA = N(6)-biotinyl-L-lysyl-[protein] + malonyl-CoA. It participates in lipid metabolism; malonyl-CoA biosynthesis; malonyl-CoA from acetyl-CoA: step 1/1. In terms of biological role, component of the acetyl coenzyme A carboxylase (ACC) complex. Biotin carboxylase (BC) catalyzes the carboxylation of biotin on its carrier protein (BCCP) and then the CO(2) group is transferred by the transcarboxylase to acetyl-CoA to form malonyl-CoA. This chain is Acetyl-coenzyme A carboxylase carboxyl transferase subunit beta, found in Streptococcus pyogenes serotype M28 (strain MGAS6180).